A 313-amino-acid chain; its full sequence is Adhesin MafA 1/2 (313 aa).

The N-terminal stretch at 1 to 14 is a signal peptide; that stretch reads MKTLLLLIPLVLTA. Cys-15 carries N-palmitoyl cysteine lipidation. Residue Cys-15 is the site of S-diacylglycerol cysteine attachment. Positions 282 to 298 are enriched in polar residues; that stretch reads GDTTAQNRPDFKQNNGK. The interval 282 to 313 is disordered; it reads GDTTAQNRPDFKQNNGKNPDVGNEVIRRRKGG.

The protein belongs to the MafA family.

Its subcellular location is the cell outer membrane. This chain is Adhesin MafA 1/2 (mafA1), found in Neisseria meningitidis serogroup C (strain 053442).